The chain runs to 367 residues: Glutamate 5-kinase (367 aa).

Lysine 10 is an ATP binding site. 3 residues coordinate substrate: serine 50, aspartate 137, and asparagine 149. Residues 169–170 and 211–217 each bind ATP; these read TD and TGGMSTK. The 79-residue stretch at 275-353 folds into the PUA domain; it reads AGEITVDEGA…QEIDAILGYE (79 aa).

This sequence belongs to the glutamate 5-kinase family.

The protein resides in the cytoplasm. It catalyses the reaction L-glutamate + ATP = L-glutamyl 5-phosphate + ADP. It functions in the pathway amino-acid biosynthesis; L-proline biosynthesis; L-glutamate 5-semialdehyde from L-glutamate: step 1/2. Functionally, catalyzes the transfer of a phosphate group to glutamate to form L-glutamate 5-phosphate. The sequence is that of Glutamate 5-kinase from Escherichia fergusonii (strain ATCC 35469 / DSM 13698 / CCUG 18766 / IAM 14443 / JCM 21226 / LMG 7866 / NBRC 102419 / NCTC 12128 / CDC 0568-73).